A 249-amino-acid chain; its full sequence is Ubiquinone biosynthesis O-methyltransferase (249 aa).

Residues Arg-44, Gly-75, Asp-96, and Met-138 each contribute to the S-adenosyl-L-methionine site.

Belongs to the methyltransferase superfamily. UbiG/COQ3 family.

It catalyses the reaction a 3-demethylubiquinol + S-adenosyl-L-methionine = a ubiquinol + S-adenosyl-L-homocysteine + H(+). The enzyme catalyses a 3-(all-trans-polyprenyl)benzene-1,2-diol + S-adenosyl-L-methionine = a 2-methoxy-6-(all-trans-polyprenyl)phenol + S-adenosyl-L-homocysteine + H(+). It participates in cofactor biosynthesis; ubiquinone biosynthesis. Functionally, O-methyltransferase that catalyzes the 2 O-methylation steps in the ubiquinone biosynthetic pathway. The chain is Ubiquinone biosynthesis O-methyltransferase from Paramagnetospirillum magneticum (strain ATCC 700264 / AMB-1) (Magnetospirillum magneticum).